Reading from the N-terminus, the 272-residue chain is F-actin-capping protein subunit beta (272 aa).

This sequence belongs to the F-actin-capping protein beta subunit family. In terms of assembly, component of the F-actin capping complex, composed of a heterodimer of an alpha and a beta subunit.

The protein resides in the cytoplasm. It localises to the cytoskeleton. Functionally, F-actin-capping proteins bind in a Ca(2+)-independent manner to the fast growing ends of actin filaments (barbed end) thereby blocking the exchange of subunits at these ends. Unlike other capping proteins (such as gelsolin and severin), these proteins do not sever actin filaments. The chain is F-actin-capping protein subunit beta (acpA) from Dictyostelium discoideum (Social amoeba).